The chain runs to 400 residues: Phosphoglycerate kinase (400 aa).

Substrate-binding positions include 19–21, Arg-38, 61–64, Arg-124, and Arg-161; these read DLN and HLGR. ATP is bound by residues Lys-211, Gly-299, Glu-330, and 356–359; that span reads GGDS.

The protein belongs to the phosphoglycerate kinase family. In terms of assembly, monomer.

The protein resides in the cytoplasm. The catalysed reaction is (2R)-3-phosphoglycerate + ATP = (2R)-3-phospho-glyceroyl phosphate + ADP. Its pathway is carbohydrate degradation; glycolysis; pyruvate from D-glyceraldehyde 3-phosphate: step 2/5. This is Phosphoglycerate kinase from Parafrankia sp. (strain EAN1pec).